A 275-amino-acid chain; its full sequence is Ribosomal RNA small subunit methyltransferase A (275 aa).

The S-adenosyl-L-methionine site is built by N28, L30, G55, E77, D103, and N123.

It belongs to the class I-like SAM-binding methyltransferase superfamily. rRNA adenine N(6)-methyltransferase family. RsmA subfamily.

Its subcellular location is the cytoplasm. The catalysed reaction is adenosine(1518)/adenosine(1519) in 16S rRNA + 4 S-adenosyl-L-methionine = N(6)-dimethyladenosine(1518)/N(6)-dimethyladenosine(1519) in 16S rRNA + 4 S-adenosyl-L-homocysteine + 4 H(+). Its function is as follows. Specifically dimethylates two adjacent adenosines (A1518 and A1519) in the loop of a conserved hairpin near the 3'-end of 16S rRNA in the 30S particle. May play a critical role in biogenesis of 30S subunits. This Allorhizobium ampelinum (strain ATCC BAA-846 / DSM 112012 / S4) (Agrobacterium vitis (strain S4)) protein is Ribosomal RNA small subunit methyltransferase A.